We begin with the raw amino-acid sequence, 382 residues long: Protein NASP homolog 1 (382 aa).

The segment at 1–39 is disordered; sequence MDTENIADASDIRVKDASGDSDEKGNGTTTEEETVEQKE. Residues 10–25 are compositionally biased toward basic and acidic residues; sequence SDIRVKDASGDSDEKG. The TPR 1 repeat unit spans residues 42 to 75; the sequence is LAELLAAGRRALKVNDIDKASDSLSEATELSSEI. Positions 103 to 112 are enriched in basic and acidic residues; that stretch reads QLLKGPGEKE. Positions 103-151 are disordered; that stretch reads QLLKGPGEKESGDEEQAGNSDDKTDEENGETEKEDGEESGEEEDDDDDT. Residues 125–150 show a composition bias toward acidic residues; sequence KTDEENGETEKEDGEESGEEEDDDDD. TPR repeat units follow at residues 191–224 and 233–266; these read ADVLVLLGEHGISDGKYTQAFEDLDRALNIQRNV and AQTYILIGNACASDANYDETVQYFGKTKDVLIAR. Residues 264–304 are a coiled coil; the sequence is IARQTELKHELERGVDDKEKKSEFENELKELEEMMPGVEEM. Positions 337 to 382 are disordered; the sequence is PQEAGDQKEANDISSLVRRPAKRAVDAPTDNQAVKKEKEEEGTTSI. A compositionally biased stretch (basic and acidic residues) spans 369–382; that stretch reads AVKKEKEEEGTTSI.

The protein belongs to the NASP family. In terms of assembly, may interact with zinc finger protein tra-4 and histone deacetylase hda-1.

Its subcellular location is the nucleus. Promotes normal hermaphrodite (XX) development, in concert with zinc finger protein tra-4 and histone deacetylase hda-1, perhaps as components of a complex. May act redundantly with nasp-2. Involved in innate immune response to B.thuringiensis strain DB27 and S.aureus bacteria. May play a role in the uptake or spreading of dsRNA. The chain is Protein NASP homolog 1 from Caenorhabditis elegans.